Consider the following 221-residue polypeptide: Holliday junction branch migration complex subunit RuvA (221 aa).

A domain I region spans residues 1–61; that stretch reads MQIYQFGKIV…DYTKITYGFA (61 aa). The tract at residues 62–139 is domain II; it reads SFRERILFED…RFNENHKNQT (78 aa). Residues 133–155 form a disordered region; sequence ENHKNQTEETNQDSQEKELEKKD. Residues 140–166 are flexible linker; the sequence is EETNQDSQEKELEKKDDLADITIQKSN. Over residues 146–155 the composition is skewed to basic and acidic residues; sequence SQEKELEKKD. The segment at 167–221 is domain III; sequence LEDKTAANLEDTLKMLGFKPRQIDYALTKVEPNENFENLIENAIKIISNAREFRN.

The protein belongs to the RuvA family. In terms of assembly, homotetramer. Forms an RuvA(8)-RuvB(12)-Holliday junction (HJ) complex. HJ DNA is sandwiched between 2 RuvA tetramers; dsDNA enters through RuvA and exits via RuvB. An RuvB hexamer assembles on each DNA strand where it exits the tetramer. Each RuvB hexamer is contacted by two RuvA subunits (via domain III) on 2 adjacent RuvB subunits; this complex drives branch migration. In the full resolvosome a probable DNA-RuvA(4)-RuvB(12)-RuvC(2) complex forms which resolves the HJ.

The protein localises to the cytoplasm. The RuvA-RuvB-RuvC complex processes Holliday junction (HJ) DNA during genetic recombination and DNA repair, while the RuvA-RuvB complex plays an important role in the rescue of blocked DNA replication forks via replication fork reversal (RFR). RuvA specifically binds to HJ cruciform DNA, conferring on it an open structure. The RuvB hexamer acts as an ATP-dependent pump, pulling dsDNA into and through the RuvAB complex. HJ branch migration allows RuvC to scan DNA until it finds its consensus sequence, where it cleaves and resolves the cruciform DNA. This is Holliday junction branch migration complex subunit RuvA from Mesomycoplasma hyopneumoniae (strain J / ATCC 25934 / NCTC 10110) (Mycoplasma hyopneumoniae).